Reading from the N-terminus, the 322-residue chain is HPr kinase/phosphorylase (322 aa).

Residues His-143 and Lys-164 contribute to the active site. 158–165 (GRSGVGKS) contacts ATP. Ser-165 lines the Mg(2+) pocket. Catalysis depends on Asp-182, which acts as the Proton acceptor; for phosphorylation activity. Proton donor; for dephosphorylation activity. Residues 206 to 215 (MEIRGLGILN) form an important for the catalytic mechanism of both phosphorylation and dephosphorylation region. Glu-207 contributes to the Mg(2+) binding site. Residue Arg-250 is part of the active site. Residues 271–276 (PVKPGR) are important for the catalytic mechanism of dephosphorylation.

Belongs to the HPrK/P family. As to quaternary structure, homohexamer. The cofactor is Mg(2+).

It catalyses the reaction [HPr protein]-L-serine + ATP = [HPr protein]-O-phospho-L-serine + ADP + H(+). The catalysed reaction is [HPr protein]-O-phospho-L-serine + phosphate + H(+) = [HPr protein]-L-serine + diphosphate. Functionally, catalyzes the ATP- as well as the pyrophosphate-dependent phosphorylation of a specific serine residue in HPr, a phosphocarrier protein of the phosphoenolpyruvate-dependent sugar phosphotransferase system (PTS). HprK/P also catalyzes the pyrophosphate-producing, inorganic phosphate-dependent dephosphorylation (phosphorolysis) of seryl-phosphorylated HPr (P-Ser-HPr). This chain is HPr kinase/phosphorylase, found in Leptospira biflexa serovar Patoc (strain Patoc 1 / Ames).